The sequence spans 736 residues: Microtubule-associated protein mu-2 (736 aa).

It belongs to the orthoreovirus mu-2 protein family. As to quaternary structure, interacts with protein mu-NS; in viral inclusions. Interacts with polymerase lambda-3; this interaction stimulates the ATPase activity of mu-2. A divalent metal cation serves as cofactor.

It is found in the virion. It localises to the host cytoplasm. The protein resides in the host cytoskeleton. Functionally, minor inner capsid (core) component. Displays NTPase and RNA 5'-triphosphatase (RTPase) activities. ATP is the preferred substrate for hydrolysis. May function as a cofactor of polymerase lambda-3. Associates with microtubules and plays a role in the formation, structural organization and morphology of viral inclusions, where the assembly of cores and the replication of viral RNA occur. Together with mu-NS, recruits the other core proteins to these inclusions. This is Microtubule-associated protein mu-2 (M1) from Mammalia (T2J).